The primary structure comprises 202 residues: Small ribosomal subunit protein uS4c (202 aa).

The interval 13–37 (RRPGVSPGLTSKTLKSKSNYIDRST) is disordered. Polar residues predominate over residues 20–37 (GLTSKTLKSKSNYIDRST). Residues 90–153 (MRLDNTIFRL…ESRSMISKNI (64 aa)) enclose the S4 RNA-binding domain.

It belongs to the universal ribosomal protein uS4 family. Part of the 30S ribosomal subunit. Contacts protein S5. The interaction surface between S4 and S5 is involved in control of translational fidelity.

The protein localises to the plastid. It localises to the chloroplast. Functionally, one of the primary rRNA binding proteins, it binds directly to 16S rRNA where it nucleates assembly of the body of the 30S subunit. In terms of biological role, with S5 and S12 plays an important role in translational accuracy. This is Small ribosomal subunit protein uS4c (rps4) from Takakia lepidozioides (Moss).